Here is an 861-residue protein sequence, read N- to C-terminus: MVANKSKATKRKVAAAPQPPTAQDKPATNGRSTKQPEADSDQSASDYYESDEENLLANINNDDGDSSDSEGEGDASDGEVQGLNIESDSDFEEDDQEADGEEEEEDSADDVNSDSSPEEDEGESEEEEEDDDEGDLEFEEDLAEPEKPRAIKEGSKAGKKQAPEVESEEEDDLETKKLLEAAAKEDEKLAALDSVLGPDGEKKTRGVGSFPPERKTGRLKNSDEYAGGDTSDEEDIRNTVGNIPMHWYDEYKHIGYDWDGNRLIKPPKMDTIDEFLKRMEDPNFWRTVKDPQTGQNVVLSDEDVGLIKRIMAGRNPDQQYNDYEPWIEWFTSEVEKMPIRNIPDHKRSFLPSKSEKQKIGRLVHALKMGWVKTRAETERLAAAAKGPKFYMVWDSDHGKEDIRRIHDHVVAPKRPLPGHAESYNPPPEYLFNERELAEWNSHEEEPWRRKLHYIPQKFNSLREVPYYAQYVRERFLRCLDLYLCPRGKRTRVTVGPEYLIPKLPSPKDLQPFPTLQNLVYRGHTDMIRTISIEPKGEYLVTGSDDKTIKIWEVSTARCIKTIPTGDVVRSVAWCPNVKISLIAVASGKRTLLINPHVGDCLLSKKTDDLLAEAPKHEVVDNERISTAVQWVDVAEEEQKAGVRIVINHFREIKQVTWHGRGDYFATVMPEAQNRSVLIHQLSKRRSQFPFSKSKGLIQCVLFHPVKPCLFVATQRHIRVYDLVKQELLKKLFPSCKWISSMAIHPKGDNLLVATYEKKMMWFDLDLSTRPYQQLKLHFSAIRNVAFHQRYPLFASASDDRSVIVSHGMVYNDLMQNALIVPLRRLENHERVNDFGAFDVVFHPTQPWLFSSGADNTVRLYT.

The interval Met1–Arg237 is disordered. The span at Asn29–Ser45 shows a compositional bias: polar residues. Composition is skewed to acidic residues over residues Asp62–Asp77 and Ser87–Ala143. Basic and acidic residues-rich tracts occupy residues Glu144–Lys156, Glu174–Ala190, and Pro212–Asp223. WD repeat units follow at residues Gly522–Thr561, Pro563–Ser603, Lys692–Lys730, Pro733–Gln772, Leu776–Gln815, and Val831–Thr861.

This sequence belongs to the WD repeat BOP1/ERB1 family.

Its subcellular location is the nucleus. The protein localises to the nucleolus. It localises to the nucleoplasm. Its function is as follows. Required for maturation of ribosomal RNAs and formation of the large ribosomal subunit. This chain is Ribosome biogenesis protein BOP1 homolog, found in Culex quinquefasciatus (Southern house mosquito).